The following is a 736-amino-acid chain: Polyphosphate kinase (736 aa).

Residue Asn-91 coordinates ATP. Positions 421 and 451 each coordinate Mg(2+). His-481 serves as the catalytic Phosphohistidine intermediate. ATP-binding residues include Tyr-514, Arg-610, and His-638.

Belongs to the polyphosphate kinase 1 (PPK1) family. Mg(2+) is required as a cofactor. An intermediate of this reaction is the autophosphorylated ppk in which a phosphate is covalently linked to a histidine residue through a N-P bond.

The catalysed reaction is [phosphate](n) + ATP = [phosphate](n+1) + ADP. Functionally, catalyzes the reversible transfer of the terminal phosphate of ATP to form a long-chain polyphosphate (polyP). This Pseudomonas syringae pv. tomato (strain ATCC BAA-871 / DC3000) protein is Polyphosphate kinase.